The chain runs to 464 residues: MIPTIALVGRPNVGKSTLFNRLTKTRDAIVANFAGLTRDRKYGDAEFEGKRFIVVDTGGISGDEEGIDSVMAEQSLQAIAESDIILFLVDCRDGLTHVDSQIAQHLRTLHKPTFLVANKVDGQNHDLAIAPFFELGLGEVHSVAAAHGRGVNTLMATVLADIAVESEADEADAERRLKMAIIGRPNVGKSTLVNRMLGEERVVVFDMPGTTRDSIYIDYERDEKHYTLIDTAGVRRRKNVKLTVEKFSIIKTLQAINDANVVILVMDASEGIVDQDLHLLGHAIESGRALVVALNKWDGLEDDHKSYVKTELQRRLSFVDYADLHFISALHGTGVGNLYKSVEKAYQAATEKYSTSFLTRILEDAVTAHQPPLVRGRRIKLRYAHAGGHNPPIIVIHGTQTSEVPNHYTRYLEKVYRRALELHGTPVRIEYRSGDNPFAGRKNKLTERQLTKKRRLMKHVKKKK.

2 consecutive EngA-type G domains span residues 3–166 (PTIA…AVES) and 177–350 (LKMA…QAAT). Residues 9-16 (GRPNVGKS), 56-60 (DTGGI), 118-121 (NKVD), 183-190 (GRPNVGKS), 230-234 (DTAGV), and 295-298 (NKWD) contribute to the GTP site. A KH-like domain is found at 351 to 435 (EKYSTSFLTR…PVRIEYRSGD (85 aa)).

The protein belongs to the TRAFAC class TrmE-Era-EngA-EngB-Septin-like GTPase superfamily. EngA (Der) GTPase family. As to quaternary structure, associates with the 50S ribosomal subunit.

GTPase that plays an essential role in the late steps of ribosome biogenesis. This Teredinibacter turnerae (strain ATCC 39867 / T7901) protein is GTPase Der.